Consider the following 409-residue polypeptide: Arginine deiminase (409 aa).

Residue Cys-399 is the Amidino-cysteine intermediate of the active site.

It belongs to the arginine deiminase family.

It is found in the cytoplasm. The enzyme catalyses L-arginine + H2O = L-citrulline + NH4(+). It participates in amino-acid degradation; L-arginine degradation via ADI pathway; carbamoyl phosphate from L-arginine: step 1/2. The polypeptide is Arginine deiminase (Streptococcus pneumoniae (strain JJA)).